Consider the following 66-residue polypeptide: Large ribosomal subunit protein bL35 (66 aa).

Over residues 1–26 the composition is skewed to basic residues; the sequence is MPKMKTHRGAAKRFKKTGTGKLKRGH. The tract at residues 1–48 is disordered; sequence MPKMKTHRGAAKRFKKTGTGKLKRGHAYTSHLFANKTQKQKRKLRKAT.

It belongs to the bacterial ribosomal protein bL35 family.

The chain is Large ribosomal subunit protein bL35 from Geobacillus sp. (strain WCH70).